The sequence spans 315 residues: Ribosomal RNA small subunit methyltransferase H (315 aa).

Residues 37–39, D57, F83, D105, and Q112 contribute to the S-adenosyl-L-methionine site; that span reads GGH. Positions 296–315 are disordered; it reads EVKANPRSRSAVMRVAEKVR.

This sequence belongs to the methyltransferase superfamily. RsmH family.

Its subcellular location is the cytoplasm. It carries out the reaction cytidine(1402) in 16S rRNA + S-adenosyl-L-methionine = N(4)-methylcytidine(1402) in 16S rRNA + S-adenosyl-L-homocysteine + H(+). Its function is as follows. Specifically methylates the N4 position of cytidine in position 1402 (C1402) of 16S rRNA. The protein is Ribosomal RNA small subunit methyltransferase H of Stutzerimonas stutzeri (strain A1501) (Pseudomonas stutzeri).